The following is a 332-amino-acid chain: Nucleoid-associated protein VP2128 (332 aa).

The protein belongs to the YejK family.

The protein localises to the cytoplasm. It is found in the nucleoid. The chain is Nucleoid-associated protein VP2128 from Vibrio parahaemolyticus serotype O3:K6 (strain RIMD 2210633).